A 675-amino-acid polypeptide reads, in one-letter code: Polyphosphate kinase (675 aa).

Position 42 (asparagine 42) interacts with ATP. 2 residues coordinate Mg(2+): arginine 372 and arginine 401. Histidine 431 acts as the Phosphohistidine intermediate in catalysis. The ATP site is built by tyrosine 464, arginine 558, and histidine 586.

It belongs to the polyphosphate kinase 1 (PPK1) family. Requires Mg(2+) as cofactor. Post-translationally, an intermediate of this reaction is the autophosphorylated ppk in which a phosphate is covalently linked to a histidine residue through a N-P bond.

It catalyses the reaction [phosphate](n) + ATP = [phosphate](n+1) + ADP. Functionally, catalyzes the reversible transfer of the terminal phosphate of ATP to form a long-chain polyphosphate (polyP). This is Polyphosphate kinase from Helicobacter pylori (strain ATCC 700392 / 26695) (Campylobacter pylori).